We begin with the raw amino-acid sequence, 303 residues long: T-box protein 38 (303 aa).

Residues 14-195 (LSTPEIWEEF…HNKFASGFRS (182 aa)) constitute a DNA-binding region (T-box). The disordered stretch occupies residues 193 to 225 (FRSNGKRRLSSDSENSENSPPKRSKLVTPPTIS). Residues 204–213 (DSENSENSPP) show a composition bias toward low complexity.

The protein resides in the nucleus. Functionally, transcription factor. Required for mesodermal induction, acting redundantly with transcription factor tbx-37. Together with tbx-37, acts by inducing cell fates in the AB lineage, thereby playing a role in development of the anterior pharynx. This Caenorhabditis elegans protein is T-box protein 38 (tbx-38).